Here is a 579-residue protein sequence, read N- to C-terminus: uncharacterized protein (579 aa).

Residues 449-577 form the GGDEF domain; the sequence is QKGVFILVDI…GKNRLMIHDS (129 aa).

This is an uncharacterized protein from Bacillus subtilis (strain 168).